The sequence spans 365 residues: tRNA(Met) cytidine acetate ligase (365 aa).

ATP-binding positions include isoleucine 7–leucine 20, glycine 96, asparagine 152, and arginine 175.

Belongs to the TmcAL family.

The protein localises to the cytoplasm. The enzyme catalyses cytidine(34) in elongator tRNA(Met) + acetate + ATP = N(4)-acetylcytidine(34) in elongator tRNA(Met) + AMP + diphosphate. Functionally, catalyzes the formation of N(4)-acetylcytidine (ac(4)C) at the wobble position of elongator tRNA(Met), using acetate and ATP as substrates. First activates an acetate ion to form acetyladenylate (Ac-AMP) and then transfers the acetyl group to tRNA to form ac(4)C34. The sequence is that of tRNA(Met) cytidine acetate ligase from Streptococcus pneumoniae serotype 19F (strain G54).